Consider the following 397-residue polypeptide: Elongation factor Tu (397 aa).

The region spanning 10–206 (KPHVNIGTIG…AVDTSIPQPE (197 aa)) is the tr-type G domain. The segment at 19–26 (GHIDHGKT) is G1. 19-26 (GHIDHGKT) contributes to the GTP binding site. Residue Thr26 coordinates Mg(2+). A G2 region spans residues 62–66 (GITIS). The interval 83–86 (DCPG) is G3. GTP contacts are provided by residues 83 to 87 (DCPGH) and 138 to 141 (NKSD). Positions 138–141 (NKSD) are G4. Residues 176-178 (SAL) form a G5 region.

The protein belongs to the TRAFAC class translation factor GTPase superfamily. Classic translation factor GTPase family. EF-Tu/EF-1A subfamily. Monomer.

The protein resides in the cytoplasm. The enzyme catalyses GTP + H2O = GDP + phosphate + H(+). In terms of biological role, GTP hydrolase that promotes the GTP-dependent binding of aminoacyl-tRNA to the A-site of ribosomes during protein biosynthesis. This Salinispora arenicola (strain CNS-205) protein is Elongation factor Tu.